A 580-amino-acid polypeptide reads, in one-letter code: Long-chain-fatty-acid--AMP ligase FadD28 (580 aa).

The interval 421-440 (SERTFGGKIVTPSPGTPEGP) is disordered.

It belongs to the ATP-dependent AMP-binding enzyme family.

It carries out the reaction holo-[mycocerosate synthase] + a long-chain fatty acid + ATP = a long-chain fatty acyl-[mycocerosate synthase] + AMP + diphosphate. It catalyses the reaction a long-chain fatty acid + ATP + H(+) = a long-chain fatty acyl-AMP + diphosphate. The enzyme catalyses holo-[mycocerosate synthase] + a long-chain fatty acyl-AMP = a long-chain fatty acyl-[mycocerosate synthase] + AMP + H(+). Its pathway is lipid metabolism; fatty acid biosynthesis. Involved in the biosynthesis of phthiocerol dimycocerosate (PDIM), a cell wall-associated lipid found only in pathogenic mycobacteria. Catalyzes the activation of long-chain fatty acids as acyl-adenylates (acyl-AMP), which are then transferred to the multifunctional polyketide synthase Mas for further chain extension. In Mycobacterium tuberculosis (strain CDC 1551 / Oshkosh), this protein is Long-chain-fatty-acid--AMP ligase FadD28 (fadD28).